We begin with the raw amino-acid sequence, 626 residues long: DNA-directed RNA polymerase subunit gamma (626 aa).

Positions 71, 73, 86, and 89 each coordinate Zn(2+). 3 residues coordinate Mg(2+): D467, D469, and D471.

It belongs to the RNA polymerase beta' chain family. RpoC1 subfamily. In terms of assembly, in cyanobacteria the RNAP catalytic core is composed of 2 alpha, 1 beta, 1 beta', 1 gamma and 1 omega subunit. When a sigma factor is associated with the core the holoenzyme is formed, which can initiate transcription. The cofactor is Mg(2+). It depends on Zn(2+) as a cofactor.

The enzyme catalyses RNA(n) + a ribonucleoside 5'-triphosphate = RNA(n+1) + diphosphate. Its function is as follows. DNA-dependent RNA polymerase catalyzes the transcription of DNA into RNA using the four ribonucleoside triphosphates as substrates. The sequence is that of DNA-directed RNA polymerase subunit gamma from Microcystis aeruginosa (strain NIES-843 / IAM M-2473).